A 346-amino-acid chain; its full sequence is Large ribosomal subunit protein uL10 (346 aa).

Positions 305–346 are disordered; the sequence is EVPAAPAPEAKEEKKEEAEEEEEEKKEVSEEDLSAGLGALFG. The segment covering 322-337 has biased composition (acidic residues); sequence AEEEEEEKKEVSEEDL.

This sequence belongs to the universal ribosomal protein uL10 family. In terms of assembly, part of the 50S ribosomal subunit. Forms part of the ribosomal stalk which helps the ribosome interact with GTP-bound translation factors. Forms a heptameric L10(L12)2(L12)2(L12)2 complex, where L10 forms an elongated spine to which the L12 dimers bind in a sequential fashion.

Its function is as follows. Forms part of the ribosomal stalk, playing a central role in the interaction of the ribosome with GTP-bound translation factors. The sequence is that of Large ribosomal subunit protein uL10 from Ignicoccus hospitalis (strain KIN4/I / DSM 18386 / JCM 14125).